The chain runs to 345 residues: MNPTELDSDVFAQDVDNQKARELREMLNTQDFVFAPGMYHALDARLAEMTGHDAAYMSGYSTVLGQFGFPDLEMVTMTEMVENAKRMVEATNLPVIADCDTGYGGIHNVRRAVREYEKAGVAAVHIEDQTTPKRCGHIAGKQIVSREKAKARFEAAVDAKQSEDTVVIARTDAYGSSNGDWDEHVERGRIYADAGVDIVWPEMPNPSREDAVAYAEEIHETHPDLKLAFNYSSSFAWSEEEDPLTFQELGDLGYKYIFITLFGLHSGAHAVYEDFKKLAEQDEEGQFDLEQRYLDHPTESHHELSFVSRYQDIETEFDPEARRRIEESEGFSEEQADPITSNDDD.

Substrate is bound at residue Ser58 to Tyr60. Asp98 is a binding site for Mg(2+). Cys135 serves as the catalytic Proton acceptor. Residues Gly136 to His137, Arg170, Asn230 to Ser234, and Thr260 each bind substrate. Positions Asp318 to Asp345 are disordered. The span at Ser328–Asp345 shows a compositional bias: acidic residues.

Homotetramer or homotrimer. Mg(2+) serves as cofactor.

The enzyme catalyses D-threo-isocitrate = glyoxylate + succinate. It participates in carbohydrate metabolism; glyoxylate cycle; (S)-malate from isocitrate: step 1/2. Functionally, involved in the metabolic adaptation in response to environmental changes. Catalyzes the reversible formation of succinate and glyoxylate from isocitrate, a key step of the glyoxylate cycle, which operates as an anaplerotic route for replenishing the tricarboxylic acid cycle during growth on fatty acid substrates. This chain is Isocitrate lyase (aceA), found in Haloferax volcanii (strain ATCC 29605 / DSM 3757 / JCM 8879 / NBRC 14742 / NCIMB 2012 / VKM B-1768 / DS2) (Halobacterium volcanii).